Reading from the N-terminus, the 20-residue chain is Juvenile hormone-binding protein (20 aa).

Its subcellular location is the secreted. Prevents juvenile hormone from being hydrolyzed by general esterases by combining with it specifically. The polypeptide is Juvenile hormone-binding protein (JHBP) (Bombyx mori (Silk moth)).